We begin with the raw amino-acid sequence, 195 residues long: Ureidoglycolate lyase (195 aa).

Belongs to the ureidoglycolate lyase family. Homodimer.

The enzyme catalyses (S)-ureidoglycolate = urea + glyoxylate. It participates in nitrogen metabolism; (S)-allantoin degradation. Its function is as follows. Catalyzes the catabolism of the allantoin degradation intermediate (S)-ureidoglycolate, generating urea and glyoxylate. Involved in the utilization of allantoin as secondary nitrogen source when primary sources are limiting. In Saccharomyces cerevisiae (strain ATCC 204508 / S288c) (Baker's yeast), this protein is Ureidoglycolate lyase (DAL3).